A 258-amino-acid polypeptide reads, in one-letter code: Hydroxyethylthiazole kinase (258 aa).

Residue Met-37 participates in substrate binding. Residues Arg-112 and Thr-158 each contribute to the ATP site. Residue Ala-185 participates in substrate binding.

It belongs to the Thz kinase family. Requires Mg(2+) as cofactor.

The catalysed reaction is 5-(2-hydroxyethyl)-4-methylthiazole + ATP = 4-methyl-5-(2-phosphooxyethyl)-thiazole + ADP + H(+). The protein operates within cofactor biosynthesis; thiamine diphosphate biosynthesis; 4-methyl-5-(2-phosphoethyl)-thiazole from 5-(2-hydroxyethyl)-4-methylthiazole: step 1/1. Catalyzes the phosphorylation of the hydroxyl group of 4-methyl-5-beta-hydroxyethylthiazole (THZ). This chain is Hydroxyethylthiazole kinase, found in Rhizobium etli (strain ATCC 51251 / DSM 11541 / JCM 21823 / NBRC 15573 / CFN 42).